A 162-amino-acid polypeptide reads, in one-letter code: NADH-quinone oxidoreductase subunit I (162 aa).

4Fe-4S ferredoxin-type domains lie at 52–82 (LRRY…IEAG) and 93–122 (TRYD…EGPN). 8 residues coordinate [4Fe-4S] cluster: Cys62, Cys65, Cys68, Cys72, Cys102, Cys105, Cys108, and Cys112.

This sequence belongs to the complex I 23 kDa subunit family. In terms of assembly, NDH-1 is composed of 14 different subunits. Subunits NuoA, H, J, K, L, M, N constitute the membrane sector of the complex. Requires [4Fe-4S] cluster as cofactor.

The protein localises to the cell inner membrane. It catalyses the reaction a quinone + NADH + 5 H(+)(in) = a quinol + NAD(+) + 4 H(+)(out). In terms of biological role, NDH-1 shuttles electrons from NADH, via FMN and iron-sulfur (Fe-S) centers, to quinones in the respiratory chain. The immediate electron acceptor for the enzyme in this species is believed to be ubiquinone. Couples the redox reaction to proton translocation (for every two electrons transferred, four hydrogen ions are translocated across the cytoplasmic membrane), and thus conserves the redox energy in a proton gradient. This is NADH-quinone oxidoreductase subunit I from Methylocella silvestris (strain DSM 15510 / CIP 108128 / LMG 27833 / NCIMB 13906 / BL2).